A 264-amino-acid chain; its full sequence is H-2 class II histocompatibility antigen, E-D beta chain (264 aa).

A signal peptide spans 1–31; that stretch reads MVWLPRVPCVAAVILLLTVLSPPVALVRDTR. Positions 32–121 are beta-1; the sequence is PRFLEYVTSE…ISDKFLVRRR (90 aa). The Extracellular portion of the chain corresponds to 32–225; sequence PRFLEYVTSE…KAQSTSAQNK (194 aa). 2 disulfide bridges follow: C42–C106 and C144–C200. A glycan (N-linked (GlcNAc...) asparagine) is linked at N46. Residues 122-215 form a beta-2 region; that stretch reads VEPTVTVYPT…SLTDPVTVEW (94 aa). The 91-residue stretch at 124-214 folds into the Ig-like C1-type domain; that stretch reads PTVTVYPTKT…PSLTDPVTVE (91 aa). The tract at residues 216–225 is connecting peptide; sequence KAQSTSAQNK. Residues 226–248 traverse the membrane as a helical segment; that stretch reads MLSGVGGFVLGLLFLGAGLFIYF. At 249–264 the chain is on the cytoplasmic side; that stretch reads RNQKGQSGLQPTGLLS.

It belongs to the MHC class II family.

It is found in the membrane. The polypeptide is H-2 class II histocompatibility antigen, E-D beta chain (Mus musculus (Mouse)).